A 139-amino-acid chain; its full sequence is Peptide methionine sulfoxide reductase MsrB (139 aa).

In terms of domain architecture, MsrB spans 8-130; it reads DREWQRELSP…NSASLQLKTQ (123 aa). Positions 47, 50, 96, and 99 each coordinate Zn(2+). C119 functions as the Nucleophile in the catalytic mechanism.

This sequence belongs to the MsrB Met sulfoxide reductase family. The cofactor is Zn(2+).

The catalysed reaction is L-methionyl-[protein] + [thioredoxin]-disulfide + H2O = L-methionyl-(R)-S-oxide-[protein] + [thioredoxin]-dithiol. The protein is Peptide methionine sulfoxide reductase MsrB of Acinetobacter baumannii (strain AB307-0294).